The primary structure comprises 1133 residues: Protein cordon-bleu (1133 aa).

The span at 1-11 (MKARAPPPPGK) shows a compositional bias: pro residues. A disordered region spans residues 1-25 (MKARAPPPPGKPAAQNVHSEQKLPH). Residues Ser31, Ser34, Ser196, Ser219, Ser256, and Ser278 each carry the phosphoserine modification. 2 disordered regions span residues 246 to 393 (AEHL…SVNG) and 442 to 568 (QGGI…GQAS). Polar residues predominate over residues 272-301 (CVTTPNSPSLHSRSLTLGPSLSLGNISGMS). Residues 307 to 312 (KKRRAP) carry the KKRRAP 1 motif. Phosphoserine is present on residues Ser330 and Ser333. The KKRRAP 2 motif lies at 340 to 345 (KKRRAP). Pro residues predominate over residues 345–358 (PAPPPPQPPPPSPV). The residue at position 356 (Ser356) is a Phosphoserine. Positions 361–371 (NRKEDKEENRK) are enriched in basic and acidic residues. 2 stretches are compositionally biased toward polar residues: residues 382–393 (TDTSSLTSSVNG) and 442–464 (QGGI…QPFI). Ser447 is subject to Phosphoserine. A compositionally biased stretch (basic and acidic residues) spans 512 to 524 (STDDPKAKDKDKM). At Ser614 the chain carries Phosphoserine. A disordered region spans residues 664-720 (APSTTITATSEKPQRDETKAGFTLTTPEQQPASQEYGAPPEEDRSRPHSAVSCPVKV). Polar residues-rich tracts occupy residues 665 to 674 (PSTTITATSE) and 686 to 696 (TLTTPEQQPAS). Ser924 is subject to Phosphoserine. Disordered regions lie at residues 942-961 (PSPL…SSIF) and 990-1018 (HTSG…YVEA). WH2 domains follow at residues 981–1001 (LHSA…LRKT) and 1021–1041 (ERSA…LRKV). Positions 993 to 1010 (GGRDKLRKTAEQASEGRP) are enriched in basic and acidic residues. The segment at 1063–1091 (DKPQQEDRGLPPPPALPPPSTPASQVPSA) is disordered. A compositionally biased stretch (pro residues) spans 1072–1083 (LPPPPALPPPST). At Ser1099 the chain carries Phosphoserine. The WH2 3 domain occupies 1109–1129 (ARQALMDAIRSGTGAARLRKV).

As to quaternary structure, identified in a complex composed of ACTA1, COBL, GSN AND TMSB4X. Identified in a complex composed of COBL, PACSIN1 and WASL. Interacts with PACSIN1, PACSIN2 and PACSIN3. Interacts (via WH2 domains) with actin monomers. Interacts with both PACSIN1 and DBNL. Detected in brain (at protein level).

It is found in the cell membrane. The protein resides in the cytoplasm. It localises to the cytoskeleton. The protein localises to the cell projection. Its subcellular location is the ruffle. It is found in the cytosol. In terms of biological role, plays an important role in the reorganization of the actin cytoskeleton. Binds to and sequesters actin monomers (G actin). Nucleates actin polymerization by assembling three actin monomers in cross-filament orientation and thereby promotes growth of actin filaments at the barbed end. Can also mediate actin depolymerization at barbed ends and severing of actin filaments. Promotes formation of cell ruffles. Regulates dendrite branching in Purkinje cells. Regulates neuron morphogenesis and increases branching of axons and dendrites. The protein is Protein cordon-bleu (Cobl) of Rattus norvegicus (Rat).